Consider the following 84-residue polypeptide: Cryptic plasmid protein A (84 aa).

In Neisseria gonorrhoeae, this protein is Cryptic plasmid protein A (cppA).